Reading from the N-terminus, the 342-residue chain is Selenide, water dikinase (342 aa).

C13 is a catalytic residue. Residues K16 and 44–46 (SCD) contribute to the ATP site. D47 serves as a coordination point for Mg(2+). ATP-binding positions include D64, D87, and 134–136 (GHS). Residue D87 participates in Mg(2+) binding. D222 is a Mg(2+) binding site.

This sequence belongs to the selenophosphate synthase 1 family. Class I subfamily. As to quaternary structure, homodimer. Mg(2+) is required as a cofactor.

It carries out the reaction hydrogenselenide + ATP + H2O = selenophosphate + AMP + phosphate + 2 H(+). In terms of biological role, synthesizes selenophosphate from selenide and ATP. This is Selenide, water dikinase from Agathobacter rectalis (strain ATCC 33656 / DSM 3377 / JCM 17463 / KCTC 5835 / VPI 0990) (Eubacterium rectale).